We begin with the raw amino-acid sequence, 255 residues long: Indole-3-glycerol phosphate synthase (255 aa).

The protein belongs to the TrpC family.

It catalyses the reaction 1-(2-carboxyphenylamino)-1-deoxy-D-ribulose 5-phosphate + H(+) = (1S,2R)-1-C-(indol-3-yl)glycerol 3-phosphate + CO2 + H2O. It participates in amino-acid biosynthesis; L-tryptophan biosynthesis; L-tryptophan from chorismate: step 4/5. The sequence is that of Indole-3-glycerol phosphate synthase from Streptococcus gordonii (strain Challis / ATCC 35105 / BCRC 15272 / CH1 / DL1 / V288).